The following is a 155-amino-acid chain: Ribosomal RNA large subunit methyltransferase H (155 aa).

S-adenosyl-L-methionine is bound by residues glycine 104 and 123–128; that span reads LSAMTF.

It belongs to the RNA methyltransferase RlmH family. As to quaternary structure, homodimer.

Its subcellular location is the cytoplasm. It carries out the reaction pseudouridine(1915) in 23S rRNA + S-adenosyl-L-methionine = N(3)-methylpseudouridine(1915) in 23S rRNA + S-adenosyl-L-homocysteine + H(+). Its function is as follows. Specifically methylates the pseudouridine at position 1915 (m3Psi1915) in 23S rRNA. This Oleidesulfovibrio alaskensis (strain ATCC BAA-1058 / DSM 17464 / G20) (Desulfovibrio alaskensis) protein is Ribosomal RNA large subunit methyltransferase H.